The sequence spans 173 residues: NADH-ubiquinone oxidoreductase chain 6 (173 aa).

Helical transmembrane passes span 1 to 21, 27 to 47, 48 to 68, 87 to 107, and 139 to 159; these read MTYF…AVAS, YGVV…LSLG, ASFV…VVFV, VIGY…ISGF, and WGVG…FVVL.

The protein belongs to the complex I subunit 6 family.

It localises to the mitochondrion membrane. The catalysed reaction is a ubiquinone + NADH + 5 H(+)(in) = a ubiquinol + NAD(+) + 4 H(+)(out). Its function is as follows. Core subunit of the mitochondrial membrane respiratory chain NADH dehydrogenase (Complex I) that is believed to belong to the minimal assembly required for catalysis. Complex I functions in the transfer of electrons from NADH to the respiratory chain. The immediate electron acceptor for the enzyme is believed to be ubiquinone. The sequence is that of NADH-ubiquinone oxidoreductase chain 6 (MT-ND6) from Brachyramphus marmoratus (Marbled murrelet).